The following is a 508-amino-acid chain: Photosystem II CP47 reaction center protein (508 aa).

6 consecutive transmembrane segments (helical) span residues 21 to 36, 101 to 115, 140 to 156, 203 to 218, 237 to 252, and 457 to 472; these read SVHI…WAGS, IVFS…IWHW, GIHL…FGAF, IAAG…FHLS, VLSS…AFVV, and SFAL…HGAR.

Belongs to the PsbB/PsbC family. PsbB subfamily. In terms of assembly, PSII is composed of 1 copy each of membrane proteins PsbA, PsbB, PsbC, PsbD, PsbE, PsbF, PsbH, PsbI, PsbJ, PsbK, PsbL, PsbM, PsbT, PsbX, PsbY, PsbZ, Psb30/Ycf12, at least 3 peripheral proteins of the oxygen-evolving complex and a large number of cofactors. It forms dimeric complexes. Requires Binds multiple chlorophylls. PSII binds additional chlorophylls, carotenoids and specific lipids. as cofactor.

The protein localises to the plastid. The protein resides in the chloroplast thylakoid membrane. Its function is as follows. One of the components of the core complex of photosystem II (PSII). It binds chlorophyll and helps catalyze the primary light-induced photochemical processes of PSII. PSII is a light-driven water:plastoquinone oxidoreductase, using light energy to abstract electrons from H(2)O, generating O(2) and a proton gradient subsequently used for ATP formation. This is Photosystem II CP47 reaction center protein from Nasturtium officinale (Watercress).